A 499-amino-acid chain; its full sequence is Ubiquitin carboxyl-terminal hydrolase 16 (499 aa).

The USP domain occupies 53–497 (VGLINRGNDC…YAYMLYYERV (445 aa)). C62 functions as the Nucleophile in the catalytic mechanism. Catalysis depends on H407, which acts as the Proton acceptor.

It belongs to the peptidase C19 family.

It catalyses the reaction Thiol-dependent hydrolysis of ester, thioester, amide, peptide and isopeptide bonds formed by the C-terminal Gly of ubiquitin (a 76-residue protein attached to proteins as an intracellular targeting signal).. The chain is Ubiquitin carboxyl-terminal hydrolase 16 (UBP16) from Saccharomyces cerevisiae (strain ATCC 204508 / S288c) (Baker's yeast).